We begin with the raw amino-acid sequence, 414 residues long: Tyrosine--tRNA ligase (414 aa).

A 'HIGH' region motif is present at residues 57-66 (PSAPDVHIGH). The 'KMSKS' region motif lies at 241–245 (KMSKS). K244 is an ATP binding site. Positions 352–413 (VPLIDLLVTL…GKRKFAKLSL (62 aa)) constitute an S4 RNA-binding domain.

The protein belongs to the class-I aminoacyl-tRNA synthetase family. TyrS type 2 subfamily. Homodimer.

It is found in the cytoplasm. The catalysed reaction is tRNA(Tyr) + L-tyrosine + ATP = L-tyrosyl-tRNA(Tyr) + AMP + diphosphate + H(+). Its function is as follows. Catalyzes the attachment of tyrosine to tRNA(Tyr) in a two-step reaction: tyrosine is first activated by ATP to form Tyr-AMP and then transferred to the acceptor end of tRNA(Tyr). The chain is Tyrosine--tRNA ligase from Shouchella clausii (strain KSM-K16) (Alkalihalobacillus clausii).